Consider the following 30-residue polypeptide: Diuretic hormone 2 (30 aa).

A Valine amide modification is found at Val30.

The protein belongs to the sauvagine/corticotropin-releasing factor/urotensin I family.

The protein resides in the secreted. Functionally, regulation of fluid secretion. This chain is Diuretic hormone 2, found in Manduca sexta (Tobacco hawkmoth).